A 504-amino-acid polypeptide reads, in one-letter code: Glucose-6-phosphate isomerase (504 aa).

Glu-333 functions as the Proton donor in the catalytic mechanism. Active-site residues include His-364 and Lys-473.

It belongs to the GPI family.

The protein resides in the cytoplasm. The enzyme catalyses alpha-D-glucose 6-phosphate = beta-D-fructose 6-phosphate. The protein operates within carbohydrate biosynthesis; gluconeogenesis. Its pathway is carbohydrate degradation; glycolysis; D-glyceraldehyde 3-phosphate and glycerone phosphate from D-glucose: step 2/4. Its function is as follows. Catalyzes the reversible isomerization of glucose-6-phosphate to fructose-6-phosphate. The polypeptide is Glucose-6-phosphate isomerase (Xanthomonas oryzae pv. oryzae (strain PXO99A)).